Reading from the N-terminus, the 242-residue chain is Orotidine 5'-phosphate decarboxylase (242 aa).

Substrate-binding positions include Asp16, Lys37, 64–73 (DLKFHDIPNT), Thr128, Arg190, Gln199, Gly219, and Arg220. The active-site Proton donor is the Lys66.

This sequence belongs to the OMP decarboxylase family. Type 1 subfamily. Homodimer.

The catalysed reaction is orotidine 5'-phosphate + H(+) = UMP + CO2. It functions in the pathway pyrimidine metabolism; UMP biosynthesis via de novo pathway; UMP from orotate: step 2/2. Catalyzes the decarboxylation of orotidine 5'-monophosphate (OMP) to uridine 5'-monophosphate (UMP). This chain is Orotidine 5'-phosphate decarboxylase, found in Prochlorococcus marinus (strain MIT 9215).